Reading from the N-terminus, the 153-residue chain is Small ribosomal subunit protein uS9 (153 aa).

The disordered stretch occupies residues 122–153 (KKAGFLTRDPRSTERKKYGLKKARKAPQYSKR). Over residues 129-138 (RDPRSTERKK) the composition is skewed to basic and acidic residues. Basic residues predominate over residues 139–153 (YGLKKARKAPQYSKR).

It belongs to the universal ribosomal protein uS9 family.

The chain is Small ribosomal subunit protein uS9 (rpsI) from Mycobacterium leprae (strain TN).